Reading from the N-terminus, the 402-residue chain is Olfactomedin-like protein 1 (402 aa).

Residues 1 to 28 (MMVALPGASASLVLFLAAFLPPLQHAQD) form the signal peptide. Asn66 is a glycosylation site (N-linked (GlcNAc...) asparagine). A coiled-coil region spans residues 73–135 (RCQTHTNEYR…EAEEEKKIRT (63 aa)). N-linked (GlcNAc...) asparagine glycans are attached at residues Asn138 and Asn183. The Olfactomedin-like domain maps to 140-397 (SCDNMLMAIK…QIIYKLQTKK (258 aa)). A disulfide bond links Cys141 and Cys324.

Highly N-glycosylated.

It localises to the secreted. The chain is Olfactomedin-like protein 1 (Olfml1) from Rattus norvegicus (Rat).